The primary structure comprises 198 residues: Peroxiredoxin-2 (198 aa).

Ala-2 carries the post-translational modification N-acetylalanine. In terms of domain architecture, Thioredoxin spans 6-164 (AHIGKPAPDF…ALRLVQAFQY (159 aa)). Cys-51 (cysteine sulfenic acid (-SOH) intermediate) is an active-site residue. The residue at position 112 (Ser-112) is a Phosphoserine. Thr-182 carries the phosphothreonine modification. Lys-196 carries the N6-acetyllysine modification.

Belongs to the peroxiredoxin family. AhpC/Prx1 subfamily. In terms of assembly, homodimer; disulfide-linked, upon oxidation. 5 homodimers assemble to form a ring-like decamer. Interacts with TIPIN. In terms of processing, the enzyme can be inactivated by further oxidation of the cysteine sulfenic acid (C(P)-SOH) to sulphinic acid (C(P)-SO2H) instead of its condensation to a disulfide bond. It can be reactivated by forming a transient disulfide bond with sulfiredoxin SRXN1, which reduces the cysteine sulfinic acid in an ATP- and Mg-dependent manner. Acetylation increases resistance to transition to high molecular-mass complexes. Deacetylated by HDAC6 which decreases reducing activity.

The protein resides in the cytoplasm. It catalyses the reaction a hydroperoxide + [thioredoxin]-dithiol = an alcohol + [thioredoxin]-disulfide + H2O. Functionally, thiol-specific peroxidase that catalyzes the reduction of hydrogen peroxide and organic hydroperoxides to water and alcohols, respectively. Plays a role in cell protection against oxidative stress by detoxifying peroxides and as sensor of hydrogen peroxide-mediated signaling events. Might participate in the signaling cascades of growth factors and tumor necrosis factor-alpha by regulating the intracellular concentrations of H(2)O(2). This Rattus norvegicus (Rat) protein is Peroxiredoxin-2 (Prdx2).